The sequence spans 362 residues: Major capsid protein VP1 (362 aa).

Residues 1–21 form a disordered region; sequence MAPTKRKGSCPGAAPKKPKEP. The short motif at 5–19 is the Bipartite nuclear localization signal element; that stretch reads KRKGSCPGAAPKKPK. The interval 302–362 is C-terminal arm; that stretch reads ISFLLSDLIN…EFGQTTTRMQ (61 aa). A Phosphothreonine; by host modification is found at threonine 338.

It belongs to the polyomaviruses coat protein VP1 family. As to quaternary structure, homomultimer; disulfide-linked. The virus capsid is composed of 72 icosahedral units, each one composed of five disulfide-linked copies of VP1. Interacts with agnoprotein. Interacts with minor capsid proteins VP2 and VP3. Interacts with host HSPA8; this interaction probably participates in virus assembly. Interacts with host SP1; this interaction enhances the efficiency of viral packaging.

Its subcellular location is the virion. The protein localises to the host nucleus. The protein resides in the host endoplasmic reticulum. Forms an icosahedral capsid with a T=7 symmetry and a 40 nm diameter. The capsid is composed of 72 pentamers linked to each other by disulfide bonds and associated with VP2 or VP3 proteins. Binds to N-glycolylneuraminic analog of the ganglioside GM1 on the cell surface to provide virion attachment to target cell. Once attached, the virion is internalized by caveolin-mediated endocytosis and traffics to the endoplasmic reticulum. Inside the endoplasmic reticulum, the protein folding machinery isomerizes VP1 interpentamer disulfide bonds, thereby triggering initial uncoating. Next, the virion uses the endoplasmic reticulum-associated degradation machinery to probably translocate in the cytosol before reaching the nucleus. Nuclear entry of the viral DNA involves the selective exposure and importin recognition of VP2/Vp3 nuclear localization signal. The assembly takes place in the cell nucleus. Encapsulates the genomic DNA and participates in rearranging nucleosomes around the viral DNA. The viral progenies exit the cells by lytic release. This Macaca (macaques) protein is Major capsid protein VP1.